A 184-amino-acid polypeptide reads, in one-letter code: Ribosome-recycling factor (184 aa).

The protein belongs to the RRF family.

The protein resides in the cytoplasm. Functionally, responsible for the release of ribosomes from messenger RNA at the termination of protein biosynthesis. May increase the efficiency of translation by recycling ribosomes from one round of translation to another. The chain is Ribosome-recycling factor from Borrelia hermsii (strain HS1 / DAH).